We begin with the raw amino-acid sequence, 413 residues long: Gamma-glutamyl phosphate reductase (413 aa).

The protein belongs to the gamma-glutamyl phosphate reductase family.

The protein resides in the cytoplasm. The enzyme catalyses L-glutamate 5-semialdehyde + phosphate + NADP(+) = L-glutamyl 5-phosphate + NADPH + H(+). It functions in the pathway amino-acid biosynthesis; L-proline biosynthesis; L-glutamate 5-semialdehyde from L-glutamate: step 2/2. Catalyzes the NADPH-dependent reduction of L-glutamate 5-phosphate into L-glutamate 5-semialdehyde and phosphate. The product spontaneously undergoes cyclization to form 1-pyrroline-5-carboxylate. In Thermus thermophilus (strain ATCC BAA-163 / DSM 7039 / HB27), this protein is Gamma-glutamyl phosphate reductase.